Consider the following 113-residue polypeptide: Putative anti-sigma factor antagonist TM_1081 (113 aa).

The STAS domain occupies 1–110 (MFPYKIVDDV…DTISEAMEEV (110 aa)). Position 55 is a phosphoserine (S55).

The protein belongs to the anti-sigma-factor antagonist family. Phosphorylated on a serine residue.

In terms of biological role, in the phosphorylated form it could act as an anti-anti-sigma factor that counteracts an anti-sigma factor and thus releases a sigma factor from inhibition. The polypeptide is Putative anti-sigma factor antagonist TM_1081 (Thermotoga maritima (strain ATCC 43589 / DSM 3109 / JCM 10099 / NBRC 100826 / MSB8)).